Reading from the N-terminus, the 75-residue chain is MEKGLIAIGIGISMISGLGVGLGQGLAAGKAAEAVGRNPEAASKIRTMMLVGQAVAESAAIYALVISILLMFAFN.

2 helical membrane passes run 4 to 24 (GLIA…GLGQ) and 54 to 74 (AVAE…MFAF).

Belongs to the ATPase C chain family. F-type ATPases have 2 components, F(1) - the catalytic core - and F(0) - the membrane proton channel. F(1) has five subunits: alpha(3), beta(3), gamma(1), delta(1), epsilon(1). F(0) has three main subunits: a(1), b(2) and c(10-14). The alpha and beta chains form an alternating ring which encloses part of the gamma chain. F(1) is attached to F(0) by a central stalk formed by the gamma and epsilon chains, while a peripheral stalk is formed by the delta and b chains.

The protein localises to the cell membrane. In terms of biological role, f(1)F(0) ATP synthase produces ATP from ADP in the presence of a proton or sodium gradient. F-type ATPases consist of two structural domains, F(1) containing the extramembraneous catalytic core and F(0) containing the membrane proton channel, linked together by a central stalk and a peripheral stalk. During catalysis, ATP synthesis in the catalytic domain of F(1) is coupled via a rotary mechanism of the central stalk subunits to proton translocation. Its function is as follows. Key component of the F(0) channel; it plays a direct role in translocation across the membrane. A homomeric c-ring of between 10-14 subunits forms the central stalk rotor element with the F(1) delta and epsilon subunits. The polypeptide is ATP synthase subunit c (Mycoplasmopsis agalactiae (strain NCTC 10123 / CIP 59.7 / PG2) (Mycoplasma agalactiae)).